Reading from the N-terminus, the 397-residue chain is Lysophospholipid transporter LplT (397 aa).

Over 1–17 (MSESVHTNTSLWSKGMK) the chain is Periplasmic. A helical transmembrane segment spans residues 18-38 (AVIVAQFLSAFGDNALLFATL). Over 39–52 (ALLKAQFYPEWSQP) the chain is Cytoplasmic. Residues 53-73 (ILQMVFVGAYILFAPFVGQVA) form a helical membrane-spanning segment. At 74–90 (DSFAKGRVMMFANGLKL) the chain is on the periplasmic side. A helical membrane pass occupies residues 91–111 (LGAASICFGINPFLGYTLVGV). Residues 112–144 (GAAAYSPAKYGILGELTTGSKLVKANGLMEAST) lie on the Cytoplasmic side of the membrane. Residues 145-165 (IAAILLGSVAGGVLADWHVLV) form a helical membrane-spanning segment. Residue Ala-166 is a topological domain, periplasmic. The helical transmembrane segment at 167 to 187 (LAACALAYGGAVVANIYIPKL) threads the bilayer. The Cytoplasmic segment spans residues 188–226 (AAARPGQSWNLINMTRSFLNACTSLWRNGETRFSLVGTS). Residues 227 to 247 (LFWGAGVTLRFLLVLWVPVAL) form a helical membrane-spanning segment. The Periplasmic segment spans residues 248–256 (GITDNATPT). Residues 257 to 277 (YLNAMVAIGIVVGAGAAAKLV) traverse the membrane as a helical segment. Topologically, residues 278–280 (TLE) are cytoplasmic. The helical transmembrane segment at 281–301 (TVSRCMPAGILIGVVVLIFSL) threads the bilayer. The Periplasmic segment spans residues 302-304 (QHE). Residues 305-325 (LLPAYALLMLIGVLGGFFVVP) form a helical membrane-spanning segment. The Cytoplasmic portion of the chain corresponds to 326 to 343 (LNALLQERGKKSVGAGNA). A helical membrane pass occupies residues 344–364 (IAVQNLGENSAMLLMLGIYSL). Topologically, residues 365–366 (AV) are periplasmic. The helical transmembrane segment at 367–387 (MVGIPVVPIGIGFGALFALAI) threads the bilayer. Topologically, residues 388-397 (TALWIWQRRY) are cytoplasmic.

It belongs to the major facilitator superfamily. LplT (TC 2.A.1.42) family.

Its subcellular location is the cell inner membrane. In terms of biological role, catalyzes the facilitated diffusion of 2-acyl-glycero-3-phosphoethanolamine (2-acyl-GPE) into the cell. The chain is Lysophospholipid transporter LplT from Escherichia coli O127:H6 (strain E2348/69 / EPEC).